The sequence spans 57 residues: Mambaquaretin-4 (57 aa).

Residues 5-55 (CNLPVKPGPCSGFFSAFYYSQKTNKCHSFTYGGCRGNGNRFRTIEECRRTC) enclose the BPTI/Kunitz inhibitor domain. Disulfide bonds link C5/C55, C14/C38, and C30/C51.

The protein belongs to the venom Kunitz-type family. As to expression, expressed by the venom gland.

It localises to the secreted. Its function is as follows. Interacts with vasopressin V2 receptor (V2R/AVPR2), probably in a selective manner. Inhibits vasopressin binding human V2R in the nanomolar range (Ki=7.34 nM), and also potently inhibits vasopressin-induced cAMP production (IC(50)=26 nM). In vivo, intraperitoneal injection of this protein into rats increases diuresis by 8.6-fold, without any loss of electrolytes. This chain is Mambaquaretin-4, found in Dendroaspis viridis (Western green mamba).